The chain runs to 536 residues: Trigger factor (536 aa).

The PPIase FKBP-type domain occupies 164-249; that stretch reads GDQVIIDFAG…VKEVKVPAAT (86 aa). The tract at residues 439 to 536 is disordered; that stretch reads IEADDDSGHV…APAKKAAAKK (98 aa). The segment covering 472 to 502 has biased composition (basic and acidic residues); that stretch reads TKKEAVKDEAKAEEAPAKKAPAKKAEPKAEA. Positions 503–515 are enriched in low complexity; it reads KPAAAKKAAPAKA. The span at 516–525 shows a compositional bias: basic and acidic residues; the sequence is AAEEKAEPAK. Over residues 527–536 the composition is skewed to basic residues; sequence APAKKAAAKK.

This sequence belongs to the FKBP-type PPIase family. Tig subfamily.

It is found in the cytoplasm. The enzyme catalyses [protein]-peptidylproline (omega=180) = [protein]-peptidylproline (omega=0). Functionally, involved in protein export. Acts as a chaperone by maintaining the newly synthesized protein in an open conformation. Functions as a peptidyl-prolyl cis-trans isomerase. This chain is Trigger factor, found in Sphingopyxis alaskensis (strain DSM 13593 / LMG 18877 / RB2256) (Sphingomonas alaskensis).